The primary structure comprises 471 residues: uncharacterized protein (471 aa).

4 helical membrane-spanning segments follow: residues 10–30 (ALWL…LFVI), 46–66 (IDDR…WFAI), 87–107 (TLII…LYFS), and 280–300 (IVVG…LYFA).

This sequence belongs to the bacterial sugar transferase family.

The protein resides in the cell membrane. It participates in glycan metabolism; exopolysaccharide biosynthesis. Its function is as follows. May function as a sugar transferase. This is an uncharacterized protein from Haemophilus influenzae (strain ATCC 51907 / DSM 11121 / KW20 / Rd).